Consider the following 382-residue polypeptide: Anhydro-N-acetylmuramic acid kinase (382 aa).

22 to 29 (GTSMDGVD) provides a ligand contact to ATP.

It belongs to the anhydro-N-acetylmuramic acid kinase family.

It catalyses the reaction 1,6-anhydro-N-acetyl-beta-muramate + ATP + H2O = N-acetyl-D-muramate 6-phosphate + ADP + H(+). Its pathway is amino-sugar metabolism; 1,6-anhydro-N-acetylmuramate degradation. The protein operates within cell wall biogenesis; peptidoglycan recycling. In terms of biological role, catalyzes the specific phosphorylation of 1,6-anhydro-N-acetylmuramic acid (anhMurNAc) with the simultaneous cleavage of the 1,6-anhydro ring, generating MurNAc-6-P. Is required for the utilization of anhMurNAc either imported from the medium or derived from its own cell wall murein, and thus plays a role in cell wall recycling. The polypeptide is Anhydro-N-acetylmuramic acid kinase (Burkholderia lata (strain ATCC 17760 / DSM 23089 / LMG 22485 / NCIMB 9086 / R18194 / 383)).